Here is a 504-residue protein sequence, read N- to C-terminus: Dimethylsulfoniopropionate lyase 5 (504 aa).

The protein belongs to the aspartate/glutamate racemases family. ALMA1 subfamily. Homotetramer.

The enzyme catalyses S,S-dimethyl-beta-propiothetin = acrylate + dimethyl sulfide + H(+). In terms of biological role, mediates cleavage of dimethylsulfoniopropionate (DMSP) into dimethyl sulfide (DMS) and acrylate. DMS is the principal form by which sulfur is transported from oceans to the atmosphere and is a key component of the ocean sulfur cycle. The polypeptide is Dimethylsulfoniopropionate lyase 5 (Emiliania huxleyi (strain CCMP1516)).